A 1010-amino-acid polypeptide reads, in one-letter code: Contactin-1 (1010 aa).

Residues 1–19 (MRFFISHLVTLCFIFCVAD) form the signal peptide. Ig-like C2-type domains follow at residues 33–123 (PVFE…ATLS), 132–215 (PEEH…KSVF), 232–317 (PADI…ARVY), 322–398 (PEWV…AELK), 404–491 (PTFE…GVLE), and 496–592 (TRIT…LVVR). Disulfide bonds link Cys57/Cys106 and Cys150/Cys203. N-linked (GlcNAc...) asparagine glycans are attached at residues Asn200 and Asn249. Cys254 and Cys301 are joined by a disulfide. A glycan (N-linked (GlcNAc...) asparagine) is linked at Asn329. Disulfide bonds link Cys343/Cys382 and Cys427/Cys475. N-linked (GlcNAc...) asparagine glycosylation is found at Asn448, Asn464, Asn485, and Asn512. The cysteines at positions 517 and 574 are disulfide-linked. N-linked (GlcNAc...) asparagine glycosylation occurs at Asn582. 4 Fibronectin type-III domains span residues 597 to 695 (PPGG…TEGA), 700 to 797 (APSD…SAQD), 802 to 897 (VPTD…APPS), and 899 to 990 (RPRI…TAGV). Residues 679 to 689 (GTGEPSMPSQR) show a composition bias toward polar residues. The interval 679–708 (GTGEPSMPSQRIRTEGAPPNVAPSDVGGGG) is disordered. Residue Asn924 is glycosylated (N-linked (GlcNAc...) asparagine). Ser984 is lipidated: GPI-anchor amidated serine. The propeptide at 985–1010 (GATAGVPTLLLGLVLPALGVLAYSGF) is removed in mature form.

It belongs to the immunoglobulin superfamily. Contactin family. As to quaternary structure, interacts with TNR.

Its subcellular location is the cell membrane. In terms of biological role, mediates cell surface interactions during nervous system development. Interaction with TNR enhances the neurite outgrowth. The chain is Contactin-1 (CNTN1) from Gallus gallus (Chicken).